We begin with the raw amino-acid sequence, 504 residues long: Sugar transport protein 14 (504 aa).

Topologically, residues methionine 1 to tyrosine 25 are cytoplasmic. The next 12 helical transmembrane spans lie at phenylalanine 26–valine 46, isoleucine 84–serine 104, valine 121–leucine 141, isoleucine 144–methionine 164, glycine 171–isoleucine 191, leucine 205–proline 225, leucine 286–tyrosine 308, serine 315–alanine 337, phenylalanine 352–leucine 372, leucine 382–glycine 402, valine 428–leucine 448, and glycine 454–leucine 474. The Cytoplasmic portion of the chain corresponds to proline 475 to glutamate 504.

It belongs to the major facilitator superfamily. Sugar transporter (TC 2.A.1.1) family.

The protein resides in the membrane. Mediates an active uptake of hexoses, probably by sugar/hydrogen symport. In Arabidopsis thaliana (Mouse-ear cress), this protein is Sugar transport protein 14 (STP14).